Reading from the N-terminus, the 634-residue chain is MQTITRTSRNSLASLTLGAIGVVYGDIGTSPLYAFREALGQAARDGIVQAEIVGVLSLALWALIIVVTLKYVIFLSRMDNNGEGGVLSLMALAQRATGGGWVAVTLLGATGAALFYGDAIITPALSVLSAAEGLKTIPGLDGMSQTAIIGVTVGILAALFMFQSRGTASVATLFGPVCLVWFVALAGLGLWHIADAPEVLTAFNPLHAVTFLVSHGVTGLFVLGAVFLTVTGAEALIADMGHFGRRPIQLGWLSFVWPALTLNYLGQGALALKALAAAEAIGQPLANADWFFIMAPDVLRAPLVILATLATIIASQAVITGAYSLTHQAISLGLLPRLTIRQTSEHQMGQIYMPGVNWLLLGGVLLLVLGFKSSSAMAAAYGIAVTGTMVVTTCMAFLIAWKYWNWEPVWTALLIAPFLALDLFFFGANILRVSEGGWVPLLVAGLVGLVIFTWLKGRRTALARASEQGVSLNETVMALHARPPTRIEGTAVFLTQDLDVTPSALLHNLKHNKALHRNNIVLKVEIQARPYVAPEQRVVVDRIDESFLKARLRYGYMDTIDVPSDLARADGLLVGPGGTSFFVGRSAIRFAARPVLPRWMTVVYMFLHRNAADPTAYFSIPSNRVVELGSQIEL.

The next 12 membrane-spanning stretches (helical) occupy residues 15–35 (LTLG…LYAF), 55–75 (VLSL…VIFL), 101–121 (WVAV…DAII), 142–162 (GMSQ…LFMF), 173–193 (LFGP…LWHI), 208–228 (AVTF…AVFL), 252–272 (WLSF…ALAL), 303–323 (LVIL…TGAY), 351–371 (IYMP…VLGF), 381–401 (YGIA…LIAW), 408–428 (PVWT…FFGA), and 435–455 (EGGW…FTWL).

This sequence belongs to the HAK/KUP transporter (TC 2.A.72) family.

The protein localises to the cell inner membrane. It catalyses the reaction K(+)(in) + H(+)(in) = K(+)(out) + H(+)(out). Functionally, transport of potassium into the cell. Likely operates as a K(+):H(+) symporter. In Novosphingobium aromaticivorans (strain ATCC 700278 / DSM 12444 / CCUG 56034 / CIP 105152 / NBRC 16084 / F199), this protein is Probable potassium transport system protein Kup 2.